The chain runs to 527 residues: MSQDTEVDMKDVELNELEPEKQPMNAADGAAAGEKNGLVKIKVAEDEAEAGVKFTGLSKEELLKVAGSPGWVRTRWALLLLFWLGWLGMLAGAVVIIVRAPRCRELPVQRWWHKGALYRIGDLQAFVGPEARGIAGLKNHLEYLSTLKVKGLVLGPIHKNQKDEVNETDLKQIDPDLGSQEDFKDLLQSAKKKSIHIILDLTPNYKGQNAWFLPPQADIVATKMKEALSSWLQDGVDGFQVRDVGKLANASLYLAEWQNITKNFSEDRLLIAGTASSDLQQIVNILESTSDLLLTSSYLSQPVFTGEHAELLVIKYLNATGSRWCSWSVSQAGLLTSFIPAQFLRLYQLLLFTLPGTPVFSYGDELGLQAVALPGQPMEAPFMLWNESSNSQTSSPVSLNMTVKGQNEDPGSLLTQFRRLSDLRGKERSLLHGDFDALSSSSGLFSYVRHWDQNERYLVVLNFQDVGLSARVGASNLPAGISLPASANLLLSTDSTRLSREEGTSLSLENLSLNPYEGLLLQFPFVA.

A disordered region spans residues 1–31; the sequence is MSQDTEVDMKDVELNELEPEKQPMNAADGAA. Over 1 to 75 the chain is Cytoplasmic; the sequence is MSQDTEVDMK…AGSPGWVRTR (75 aa). Position 2 is a phosphoserine (serine 2). Threonine 5 is modified (phosphothreonine). The span at 7–21 shows a compositional bias: basic and acidic residues; that stretch reads VDMKDVELNELEPEK. A Glycyl lysine isopeptide (Lys-Gly) (interchain with G-Cter in ubiquitin) cross-link involves residue lysine 42. Phosphoserine is present on serine 58. Lysine 59 is covalently cross-linked (Glycyl lysine isopeptide (Lys-Gly) (interchain with G-Cter in SUMO2)). The chain crosses the membrane as a helical; Signal-anchor for type II membrane protein span at residues 76–98; the sequence is WALLLLFWLGWLGMLAGAVVIIV. The Extracellular portion of the chain corresponds to 99-527; it reads RAPRCRELPV…GLLLQFPFVA (429 aa). N-linked (GlcNAc...) asparagine glycosylation is found at asparagine 166, asparagine 249, asparagine 259, and asparagine 263. Position 300 is a phosphoserine (serine 300). Residues asparagine 318, asparagine 386, and asparagine 400 are each glycosylated (N-linked (GlcNAc...) asparagine). Serine 421 carries the post-translational modification Phosphoserine. Asparagine 510 carries an N-linked (GlcNAc...) asparagine glycan.

This sequence belongs to the SLC3A transporter family. As to quaternary structure, disulfide-linked heterodimer with a non-glycosylated light chain (SLC7A5, SLC7A6, SLC7A7, SLC7A8, SLC7A10 or SLC7A11). Interacts with TLCD3A/CT120 and ICAM1. Constitutively and specifically associates with beta-1 integrins (alpha-2/beta-1, alpha-3/beta-1, alpha-5/beta-1 and alpha-6/beta-1), but minimally with alpha-4/beta-1. Interacts with LAPTM4B; recruits SLC3A2 and SLC7A5 to lysosomes to promote leucine uptake into these organelles and is required for mTORC1 activation. In terms of processing, phosphorylation on Ser-300 and on Ser-421 by ecto-protein kinases favors heterotypic cell-cell interactions. Post-translationally, N-glycosylated; N-glycosylation is crucial for trafficking and stability of SLC3A2 to the plasma membrane. As to expression, in brain expressed on capillary endothelia in cerebral cortex (at protein level). Highest expression in kidney, jejunum, ileum, colon, placenta, testis and spleen. Lower levels found in liver, lung and brain with weakest expression in heart. Expressed in retina, inner blood-retinal barrier of retina, retinal vascular endothelial cells. Also expressed in C6 glioma cells and in the retinal capillary endothelial cell line TR-iBRB2.

Its subcellular location is the apical cell membrane. It localises to the cell membrane. It is found in the cell junction. The protein localises to the lysosome membrane. The protein resides in the melanosome. Its subcellular location is the basolateral cell membrane. Acts as a chaperone that facilitates biogenesis and trafficking of functional transporters heterodimers to the plasma membrane. Forms heterodimer with SLC7 family transporters (SLC7A5, SLC7A6, SLC7A7, SLC7A8, SLC7A10 and SLC7A11), a group of amino-acid antiporters. Heterodimers function as amino acids exchangers, the specificity of the substrate depending on the SLC7A subunit. Heterodimers formed by SLC3A2/SLC7A6 or SLC3A2/SLC7A7 mediate the uptake of dibasic amino acids. Heterodimer SLC3A2/SLC7A11 functions as an antiporter by mediating the exchange of extracellular anionic L-cystine and intracellular L-glutamate across the cellular plasma membrane. SLC3A2/SLC7A10 translocates small neutral L- and D-amino acids across the plasma membrane. SLC3A2/SLC75 or SLC3A2/SLC7A8 translocates neutral amino acids with broad specificity, thyroid hormones and L-DOPA. SLC3A2 is essential for plasma membrane localization, stability, and the transport activity of SLC7A5 and SLC7A8. When associated with LAPTM4B, the heterodimer SLC7A5 is recruited to lysosomes to promote leucine uptake into these organelles, and thereby mediates mTORC1 activation. Modulates integrin-related signaling and is essential for integrin-dependent cell spreading, migration and tumor progression. This chain is Amino acid transporter heavy chain SLC3A2, found in Rattus norvegicus (Rat).